Consider the following 656-residue polypeptide: MSSNSYQVSIPMSKRNTNGLPGSSSNELKTSAGGAVLSFHDICYRVKVKSGFLFCRKTVEKEILTNINGIMKPGLNAILGPTGGGKSSLLDVLAARKDPHGLSGDVLINGAPRPANFKCNSGYVVQDDVVMGTLTVRENLQFSAALRLPTTMTNHEKNERINMVIQELGLDKVADSKVGTQFIRGVSGGERKRTSIAMELITDPSILFLDEPTTGLDSSTANAVLLLLKRMSKQGRTIIFSIHQPRYSIFKLFDSLTLLASGRLMFHGPAREALGYFASIGYNCEPYNNPADFFLDVINGDSSAVVLSRADRDEGAQEPEEPPEKDTPLIDKLAAFYTNSSFFKDTKVELDQFSGGRKKKKSSVYKEVTYTTSFCHQLRWISRRSFKNLLGNPQASVAQIIVTIILGLVIGAIFYDLKNDPSGIQNRAGVLFFLTTNQCFSSVSAVELLVVEKKLFIHEYISGYYRVSSYFFGKLLSDLLPMRMLPSIIFTCITYFLLGLKPAVGSFFIMMFTLMMVAYSASSMALAIAAGQSVVSVATLLMTISFVFMMIFSGLLVNLKTVVPWLSWLQYFSIPRYGFSALQYNEFLGQNFCPGLNVTTNNTCSFAICTGAEYLENQGISLSAWGLWQNHVALACMMVIFLTIAYLKLLLLKKYS.

Residues 1–25 (MSSNSYQVSIPMSKRNTNGLPGSSS) are disordered. The Cytoplasmic portion of the chain corresponds to 1 to 394 (MSSNSYQVSI…SFKNLLGNPQ (394 aa)). Residues 37–286 (LSFHDICYRV…FASIGYNCEP (250 aa)) form the ABC transporter domain. ATP-binding positions include 80 to 87 (GPTGGGKS), 184 to 190 (RGVSGGE), glutamate 211, and histidine 243. The ABC transmembrane type-2 domain maps to 390 to 652 (LGNPQASVAQ…TIAYLKLLLL (263 aa)). Residues 395–415 (ASVAQIIVTIILGLVIGAIFY) traverse the membrane as a helical segment. The Extracellular segment spans residues 416–429 (DLKNDPSGIQNRAG). The chain crosses the membrane as a helical span at residues 430–450 (VLFFLTTNQCFSSVSAVELLV). The Cytoplasmic segment spans residues 451 to 478 (VEKKLFIHEYISGYYRVSSYFFGKLLSD). A helical membrane pass occupies residues 479-498 (LLPMRMLPSIIFTCITYFLL). The Extracellular segment spans residues 499-507 (GLKPAVGSF). The chain crosses the membrane as a helical span at residues 508–530 (FIMMFTLMMVAYSASSMALAIAA). Residues 531–536 (GQSVVS) lie on the Cytoplasmic side of the membrane. A helical transmembrane segment spans residues 537–557 (VATLLMTISFVFMMIFSGLLV). Over 558-631 (NLKTVVPWLS…LSAWGLWQNH (74 aa)) the chain is Extracellular. The cysteines at positions 593 and 609 are disulfide-linked. 2 N-linked (GlcNAc...) asparagine glycosylation sites follow: asparagine 597 and asparagine 601. The helical transmembrane segment at 632–652 (VALACMMVIFLTIAYLKLLLL) threads the bilayer. Residues 653-656 (KKYS) are Cytoplasmic-facing.

Belongs to the ABC transporter superfamily. ABCG family. Eye pigment precursor importer (TC 3.A.1.204) subfamily. In terms of assembly, homodimer; disulfide-linked. The minimal functional unit is a homodimer, but the major oligomeric form in plasma membrane is a homotetramer with possibility of higher order oligomerization up to homododecamers. N-glycosylated. Glycosylation-deficient ABCG2 is normally expressed and functional. In terms of processing, phosphorylated. Phosphorylation may regulate the localization to the plasma membrane, the homooligomerization and therefore, the activity of the transporter. In terms of tissue distribution, high expression in brain, kidney and lung. Also expressed in livere, colon, small intestine, heart, skeletal muscle, spleen, stomach and pancreas.

It is found in the cell membrane. The protein resides in the apical cell membrane. It localises to the mitochondrion membrane. The catalysed reaction is ATP + H2O + xenobioticSide 1 = ADP + phosphate + xenobioticSide 2.. It catalyses the reaction urate(in) + ATP + H2O = urate(out) + ADP + phosphate + H(+). The enzyme catalyses indoxyl sulfate(in) + ATP + H2O = indoxyl sulfate(out) + ADP + phosphate + H(+). It carries out the reaction sphing-4-enine 1-phosphate(in) + ATP + H2O = sphing-4-enine 1-phosphate(out) + ADP + phosphate + H(+). The catalysed reaction is estrone 3-sulfate(in) + ATP + H2O = estrone 3-sulfate(out) + ADP + phosphate + H(+). It catalyses the reaction dehydroepiandrosterone 3-sulfate(in) + ATP + H2O = dehydroepiandrosterone 3-sulfate(out) + ADP + phosphate + H(+). The enzyme catalyses 4-methylumbelliferone sulfate(in) + ATP + H2O = 4-methylumbelliferone sulfate(out) + ADP + phosphate + H(+). It carries out the reaction 5,7-dimethyl-2-methylamino-4-(3-pyridylmethyl)-1,3-benzothiazol-6-yl beta-D-glucuronate(in) + ATP + H2O = 5,7-dimethyl-2-methylamino-4-(3-pyridylmethyl)-1,3-benzothiazol-6-yl beta-D-glucuronate(out) + ADP + phosphate + H(+). The catalysed reaction is 4-methylumbelliferone beta-D-glucuronate(in) + ATP + H2O = 4-methylumbelliferone beta-D-glucuronate(out) + ADP + phosphate + H(+). It catalyses the reaction 5,7-dimethyl-2-methylamino-4-(3-pyridylmethyl)-1,3-benzothiazol-6-yl sulfate(in) + ATP + H2O = 5,7-dimethyl-2-methylamino-4-(3-pyridylmethyl)-1,3-benzothiazol-6-yl sulfate(out) + ADP + phosphate + H(+). The enzyme catalyses 17beta-estradiol 17-O-(beta-D-glucuronate)(in) + ATP + H2O = 17beta-estradiol 17-O-(beta-D-glucuronate)(out) + ADP + phosphate + H(+). It carries out the reaction methotrexate(in) + ATP + H2O = methotrexate(out) + ADP + phosphate + H(+). The catalysed reaction is riboflavin(in) + ATP + H2O = riboflavin(out) + ADP + phosphate + H(+). It catalyses the reaction pheophorbide a(in) + ATP + H2O = pheophorbide a(out) + ADP + phosphate + H(+). The enzyme catalyses itaconate(in) + ATP + H2O = itaconate(out) + ADP + phosphate + H(+). Its function is as follows. Broad substrate specificity ATP-dependent transporter of the ATP-binding cassette (ABC) family that actively extrudes a wide variety of physiological compounds, dietary toxins and xenobiotics from cells. Involved in porphyrin homeostasis, mediating the export of protoporphyrin IX (PPIX) from both mitochondria to cytosol and cytosol to extracellular space, it also functions in the cellular export of heme. Also mediates the efflux of sphingosine-1-P from cells. Acts as a urate exporter functioning in both renal and extrarenal urate excretion. In kidney, it also functions as a physiological exporter of the uremic toxin indoxyl sulfate. Also involved in the excretion of steroids like estrone 3-sulfate/E1S, 3beta-sulfooxy-androst-5-en-17-one/DHEAS, and other sulfate conjugates. Mediates the secretion of the riboflavin and biotin vitamins into milk. Extrudes pheophorbide a, a phototoxic porphyrin catabolite of chlorophyll, reducing its bioavailability. Plays an important role in the exclusion of xenobiotics from the brain. It confers to cells a resistance to multiple drugs and other xenobiotics including mitoxantrone, pheophorbide, camptothecin, methotrexate, azidothymidine, and the anthracyclines daunorubicin and doxorubicin, through the control of their efflux. In placenta, it limits the penetration of drugs from the maternal plasma into the fetus. May play a role in early stem cell self-renewal by blocking differentiation. In inflammatory macrophages, exports itaconate from the cytosol to the extracellular compartment and limits the activation of TFEB-dependent lysosome biogenesis involved in antibacterial innate immune response. This chain is Broad substrate specificity ATP-binding cassette transporter ABCG2 (ABCG2), found in Sus scrofa (Pig).